The following is a 94-amino-acid chain: Acylphosphatase (94 aa).

Residues 5-94 (RLTAFVHGHV…PRDVEGFVER (90 aa)) enclose the Acylphosphatase-like domain. Catalysis depends on residues Arg-20 and Asn-38.

This sequence belongs to the acylphosphatase family.

It catalyses the reaction an acyl phosphate + H2O = a carboxylate + phosphate + H(+). The protein is Acylphosphatase (acyP) of Corynebacterium glutamicum (strain R).